We begin with the raw amino-acid sequence, 234 residues long: Venom allergen 3 (234 aa).

An N-terminal signal peptide occupies residues 1 to 22 (MELIVSILWLAITAENLANTLA). 4 disulfide bridges follow: Cys26-Cys41, Cys31-Cys125, Cys52-Cys118, and Cys198-Cys216. The 150-residue stretch at 69 to 218 (VNKHNELRQR…WTKHYLVCNY (150 aa)) folds into the SCP domain. The tract at residues 80–99 (ASGKEMRGTNGPQPPAVKMP) is disordered.

It belongs to the CRISP family. In terms of tissue distribution, expressed by the venom gland.

Its subcellular location is the secreted. The sequence is that of Venom allergen 3 from Solenopsis invicta (Red imported fire ant).